A 234-amino-acid polypeptide reads, in one-letter code: Large ribosomal subunit protein uL1 (234 aa).

It belongs to the universal ribosomal protein uL1 family. In terms of assembly, part of the 50S ribosomal subunit.

Binds directly to 23S rRNA. The L1 stalk is quite mobile in the ribosome, and is involved in E site tRNA release. Its function is as follows. Protein L1 is also a translational repressor protein, it controls the translation of the L11 operon by binding to its mRNA. This is Large ribosomal subunit protein uL1 from Bartonella tribocorum (strain CIP 105476 / IBS 506).